The primary structure comprises 649 residues: Glycerol-3-phosphate dehydrogenase, mitochondrial (649 aa).

69–97 (DVLIIGGGATGTGCALDAATRGLNVALVE) lines the FAD pocket.

The protein belongs to the FAD-dependent glycerol-3-phosphate dehydrogenase family. The cofactor is FAD.

It localises to the mitochondrion inner membrane. It is found in the mitochondrion intermembrane space. It carries out the reaction a quinone + sn-glycerol 3-phosphate = dihydroxyacetone phosphate + a quinol. Its pathway is polyol metabolism; glycerol degradation via glycerol kinase pathway; glycerone phosphate from sn-glycerol 3-phosphate (anaerobic route): step 1/1. The polypeptide is Glycerol-3-phosphate dehydrogenase, mitochondrial (GUT2) (Saccharomyces cerevisiae (strain ATCC 204508 / S288c) (Baker's yeast)).